The following is a 706-amino-acid chain: Polyribonucleotide nucleotidyltransferase (706 aa).

2 residues coordinate Mg(2+): Asp487 and Asp493. The KH domain maps to 553–612 (PRLFTMKINQDKIREVIGKGGETIRAITAETGTEINIAEDGTITIAATTQEAGDAAKKRI). The S1 motif domain maps to 622–692 (GKVYEGTVVK…DRGRVRLSIK (71 aa)).

This sequence belongs to the polyribonucleotide nucleotidyltransferase family. The cofactor is Mg(2+).

The protein resides in the cytoplasm. The catalysed reaction is RNA(n+1) + phosphate = RNA(n) + a ribonucleoside 5'-diphosphate. In terms of biological role, involved in mRNA degradation. Catalyzes the phosphorolysis of single-stranded polyribonucleotides processively in the 3'- to 5'-direction. In Neisseria meningitidis serogroup A / serotype 4A (strain DSM 15465 / Z2491), this protein is Polyribonucleotide nucleotidyltransferase.